The sequence spans 524 residues: MEMDMDTIRKAIAATIFALVMAWAWRVLDWAWFTPKRIEKRLRQQGFRGNPYRFLVGDVKESGKMHQEALSKPMEFNNDIVPRLMPHINHTINTYGRNSFTWMGRIPRIHVMEPELIKEVLTHSSKYQKNFDVHNPLVKFLLTGVGSFEGAKWSKHRRIISPAFTLEKLKSMLPAFAICYHDMLTKWEKIAEKQGSHEVDIFPTFDVLTSDVISKVAFGSTYEEGGKIFRLLKELMDLTIDCMRDVYIPGWSYLPTKRNKRMKEINKEITDMLRFIINKRMKALKAGEPGEDDLLGVLLESNIQEIQKQGNKKDGGMSINDVIEECKLFYFAGQETTGVLLTWTTILLSKHPEWQERAREEVLQAFGKNKPEFERLNHLKYVSMILYEVLRLYPPVIDLTKIVHKDTKLGSYTIPAGTQVMLPTVMLHREKSIWGEDAMEFNPMRFVDGVANATKNNVTYLPFSWGPRVCLGQNFALLQAKLGLAMILQRFKFDVAPSYVHAPFTILTVQPQFGSHVIYKKLES.

Residues 1-11 (MEMDMDTIRKA) are Lumenal-facing. The chain crosses the membrane as a helical span at residues 12-32 (IAATIFALVMAWAWRVLDWAW). At 33–524 (FTPKRIEKRL…SHVIYKKLES (492 aa)) the chain is on the cytoplasmic side. Heme is bound at residue C470.

Belongs to the cytochrome P450 family. It depends on heme as a cofactor. As to expression, upper and lower leaf epidermis.

Its subcellular location is the endoplasmic reticulum membrane. The enzyme catalyses loganin + reduced [NADPH--hemoprotein reductase] + O2 = secologanin + oxidized [NADPH--hemoprotein reductase] + 2 H2O + H(+). It carries out the reaction secologanin + reduced [NADPH--hemoprotein reductase] + O2 = secoxyloganin + oxidized [NADPH--hemoprotein reductase] + H2O + 2 H(+). It functions in the pathway alkaloid biosynthesis; secologanin biosynthesis. Its function is as follows. Component of the seco-iridoid and derivatives monoterpenoid indole alkaloids (MIAs, e.g. secologanin) biosynthesis pathway. Catalyzes the conversion of loganin into secologanin. Catalyzes the conversion of secologanin into secoxyloganin. The polypeptide is Secologanin synthase 1 (Catharanthus roseus (Madagascar periwinkle)).